We begin with the raw amino-acid sequence, 102 residues long: NADH-quinone oxidoreductase subunit K (102 aa).

Helical transmembrane passes span 5–25 (LAHY…GIFL), 31–51 (IILL…FVAF), and 62–82 (VFVF…LAIL).

Belongs to the complex I subunit 4L family. NDH-1 is composed of 14 different subunits. Subunits NuoA, H, J, K, L, M, N constitute the membrane sector of the complex.

The protein localises to the cell inner membrane. The catalysed reaction is a quinone + NADH + 5 H(+)(in) = a quinol + NAD(+) + 4 H(+)(out). NDH-1 shuttles electrons from NADH, via FMN and iron-sulfur (Fe-S) centers, to quinones in the respiratory chain. The immediate electron acceptor for the enzyme in this species is believed to be ubiquinone. Couples the redox reaction to proton translocation (for every two electrons transferred, four hydrogen ions are translocated across the cytoplasmic membrane), and thus conserves the redox energy in a proton gradient. The sequence is that of NADH-quinone oxidoreductase subunit K from Bordetella parapertussis (strain 12822 / ATCC BAA-587 / NCTC 13253).